The sequence spans 626 residues: Putative ankyrin repeat protein L768 (626 aa).

ANK repeat units follow at residues 217–246 (NLYD…EYDF), 333–362 (DLDM…NINK), 421–451 (TAEN…TEHI), 515–545 (SNLK…NQDY), and 547–571 (QWAL…NVNP).

In Acanthamoeba polyphaga mimivirus (APMV), this protein is Putative ankyrin repeat protein L768.